Reading from the N-terminus, the 429-residue chain is 3-phosphoshikimate 1-carboxyvinyltransferase (429 aa).

Residues K20, S21, and R25 each contribute to the 3-phosphoshikimate site. Residue K20 coordinates phosphoenolpyruvate. Residues G89 and R118 each coordinate phosphoenolpyruvate. 3-phosphoshikimate-binding residues include S164, S165, Q166, S192, D311, and K338. Q166 serves as a coordination point for phosphoenolpyruvate. The Proton acceptor role is filled by D311. Phosphoenolpyruvate is bound by residues R342 and R384.

Belongs to the EPSP synthase family. In terms of assembly, monomer.

Its subcellular location is the cytoplasm. The catalysed reaction is 3-phosphoshikimate + phosphoenolpyruvate = 5-O-(1-carboxyvinyl)-3-phosphoshikimate + phosphate. Its pathway is metabolic intermediate biosynthesis; chorismate biosynthesis. In terms of biological role, catalyzes the transfer of the enolpyruvyl moiety of phosphoenolpyruvate (PEP) to the 5-hydroxyl of shikimate-3-phosphate (S3P) to produce enolpyruvyl shikimate-3-phosphate and inorganic phosphate. The protein is 3-phosphoshikimate 1-carboxyvinyltransferase of Methanococcus maripaludis (strain C5 / ATCC BAA-1333).